Here is a 284-residue protein sequence, read N- to C-terminus: NADH-cytochrome b5 reductase 1 (284 aa).

The helical transmembrane segment at Lys-7–Pro-27 threads the bilayer. The FAD-binding FR-type domain occupies Asn-38 to Glu-142. FAD-binding positions include Gly-122 to Gly-137 and His-148 to Leu-180.

The protein belongs to the flavoprotein pyridine nucleotide cytochrome reductase family. As to quaternary structure, monomer. Component of the 2-(3-amino-3-carboxypropyl)histidine synthase complex composed of DPH1, DPH2, KTI11/DPH3 and a NADH-dependent reductase, predominantly CBR1. Interacts with KTI11/DPH3. Interacts with STE20. FAD serves as cofactor.

The protein localises to the mitochondrion outer membrane. The enzyme catalyses 2 Fe(III)-[cytochrome b5] + NADH = 2 Fe(II)-[cytochrome b5] + NAD(+) + H(+). It carries out the reaction 2 Fe(3+)-[Dph3] + NADH = 2 Fe(2+)-[Dph3] + NAD(+) + H(+). It functions in the pathway protein modification; peptidyl-diphthamide biosynthesis. With respect to regulation, competitively inhibited by NAD(+). Inhibited by mercurials such as p-chloromercuribenzoate (PCMB) and HgCl(2). Enzymatic activity increases under anaerobic conditions. Functionally, NADH-dependent reductase for KTI11/DPH3 and cytochrome b5. Required for the first step of diphthamide biosynthesis, a post-translational modification of histidine which occurs in elongation factor 2. DPH1 and DPH2 transfer a 3-amino-3-carboxypropyl (ACP) group from S-adenosyl-L-methionine (SAM) to a histidine residue, the reaction is assisted by a reduction system comprising KTI11/DPH3 and a NADH-dependent reductase, predominantly CBR1. By reducing KTI11/DPH3, also involved in the formation of the tRNA wobble base modification mcm5s 2U (5-methoxycarbonylmethyl-2-thiouridine), mediated by the elongator complex. The cytochrome b5/NADH cytochrome b5 reductase electron transfer system supports the catalytic activity of several sterol biosynthetic enzymes. Plays a role in bud morphology. In Saccharomyces cerevisiae (strain ATCC 204508 / S288c) (Baker's yeast), this protein is NADH-cytochrome b5 reductase 1 (CBR1).